Reading from the N-terminus, the 474-residue chain is tRNA-2-methylthio-N(6)-dimethylallyladenosine synthase (474 aa).

An MTTase N-terminal domain is found at 3-120 (KKLHIKTWGC…LPEMIEQVRR (118 aa)). [4Fe-4S] cluster contacts are provided by cysteine 12, cysteine 49, cysteine 83, cysteine 157, cysteine 161, and cysteine 164. The Radical SAM core domain occupies 143-375 (RAEGPTAFVS…QDRITQQAMR (233 aa)). Positions 378–441 (RHMMGTVQRI…TNSLRGKFIR (64 aa)) constitute a TRAM domain.

The protein belongs to the methylthiotransferase family. MiaB subfamily. As to quaternary structure, monomer. Requires [4Fe-4S] cluster as cofactor.

It localises to the cytoplasm. It catalyses the reaction N(6)-dimethylallyladenosine(37) in tRNA + (sulfur carrier)-SH + AH2 + 2 S-adenosyl-L-methionine = 2-methylsulfanyl-N(6)-dimethylallyladenosine(37) in tRNA + (sulfur carrier)-H + 5'-deoxyadenosine + L-methionine + A + S-adenosyl-L-homocysteine + 2 H(+). Catalyzes the methylthiolation of N6-(dimethylallyl)adenosine (i(6)A), leading to the formation of 2-methylthio-N6-(dimethylallyl)adenosine (ms(2)i(6)A) at position 37 in tRNAs that read codons beginning with uridine. This Shewanella oneidensis (strain ATCC 700550 / JCM 31522 / CIP 106686 / LMG 19005 / NCIMB 14063 / MR-1) protein is tRNA-2-methylthio-N(6)-dimethylallyladenosine synthase.